The following is a 254-amino-acid chain: NAD-dependent protein deacetylase 1 (254 aa).

A Deacetylase sirtuin-type domain is found at Ala5–Asn254. Positions 31, 35, 42, 43, 108, 110, 111, and 128 each coordinate NAD(+). Phe42 serves as a coordination point for nicotinamide. Residues Ile110 and Asp111 each coordinate nicotinamide. His128 functions as the Proton acceptor in the catalytic mechanism. Residues Cys136, Cys139, Cys160, and Cys163 each coordinate Zn(2+). Residues Ser201, Ser202, Asn226, Asp243, and Ile244 each coordinate NAD(+).

Belongs to the sirtuin family. Class U subfamily. Zn(2+) is required as a cofactor.

Its subcellular location is the cytoplasm. It carries out the reaction N(6)-acetyl-L-lysyl-[protein] + NAD(+) + H2O = 2''-O-acetyl-ADP-D-ribose + nicotinamide + L-lysyl-[protein]. Functionally, NAD-dependent protein deacetylase which modulates the activities of several enzymes which are inactive in their acetylated form. In Bradyrhizobium diazoefficiens (strain JCM 10833 / BCRC 13528 / IAM 13628 / NBRC 14792 / USDA 110), this protein is NAD-dependent protein deacetylase 1.